Consider the following 235-residue polypeptide: NADH-quinone oxidoreductase subunit B 2 (235 aa).

Residues 1–14 show a composition bias toward low complexity; it reads MGLTSRPTPASRQP. The segment at 1 to 24 is disordered; sequence MGLTSRPTPASRQPASPPPADPVL. [4Fe-4S] cluster is bound by residues cysteine 63, cysteine 64, cysteine 129, and cysteine 159. The interval 188 to 235 is disordered; the sequence is TGATGGGPSTDALRSGLVAAPTAPGPTAPASTAPGPTAPAPTQDEERR.

Belongs to the complex I 20 kDa subunit family. As to quaternary structure, NDH-1 is composed of 14 different subunits. Subunits NuoB, C, D, E, F, and G constitute the peripheral sector of the complex. The cofactor is [4Fe-4S] cluster.

The protein resides in the cell membrane. The catalysed reaction is a quinone + NADH + 5 H(+)(in) = a quinol + NAD(+) + 4 H(+)(out). In terms of biological role, NDH-1 shuttles electrons from NADH, via FMN and iron-sulfur (Fe-S) centers, to quinones in the respiratory chain. The immediate electron acceptor for the enzyme in this species is believed to be a menaquinone. Couples the redox reaction to proton translocation (for every two electrons transferred, four hydrogen ions are translocated across the cytoplasmic membrane), and thus conserves the redox energy in a proton gradient. The protein is NADH-quinone oxidoreductase subunit B 2 of Streptomyces griseus subsp. griseus (strain JCM 4626 / CBS 651.72 / NBRC 13350 / KCC S-0626 / ISP 5235).